The following is a 338-amino-acid chain: E3 ubiquitin-protein ligase RING1 (338 aa).

The disordered stretch occupies residues 102–124; sequence TTTSSSASIDPNNPSLSGPTRSG. Positions 110-121 are enriched in polar residues; the sequence is IDPNNPSLSGPT. Residues 224–265 form an RING-type; atypical zinc finger; it reads CAVCMDDFEEGTEAKQMPCKHLYHKDCLLPWLELHNSCPVCR. Composition is skewed to basic and acidic residues over residues 267–279 and 298–309; these read ELPT…ERRV and SDGDNRTVERSF. A disordered region spans residues 267–338; that stretch reads ELPTDDPDYE…NAETRQEDLD (72 aa).

In terms of processing, auto-ubiquitinated as part of the enzymatic reaction. As to expression, mostly expressed in cotton fibers, and, to a lower extent, in leaves and flowers.

The enzyme catalyses S-ubiquitinyl-[E2 ubiquitin-conjugating enzyme]-L-cysteine + [acceptor protein]-L-lysine = [E2 ubiquitin-conjugating enzyme]-L-cysteine + N(6)-ubiquitinyl-[acceptor protein]-L-lysine.. It participates in protein modification; protein ubiquitination. In terms of biological role, E3 ubiquitin-protein ligase which accepts ubiquitin from an E2 ubiquitin-conjugating enzyme in the form of a thioester and then directly transfers the ubiquitin to targeted substrates. Promotes polyubiquitination of target proteins. This Gossypium hirsutum (Upland cotton) protein is E3 ubiquitin-protein ligase RING1 (RING1).